Here is a 554-residue protein sequence, read N- to C-terminus: Carboxypeptidase Y homolog A (554 aa).

An N-terminal signal peptide occupies residues 1-17 (MRISASTVLLGAASAAS). Positions 18–137 (AASFQNQAQQ…QLDNFNLRVK (120 aa)) are excised as a propeptide. 5 disulfides stabilise this stretch: cysteine 191–cysteine 431, cysteine 325–cysteine 339, cysteine 349–cysteine 372, cysteine 356–cysteine 365, and cysteine 394–cysteine 401. N-linked (GlcNAc...) asparagine glycosylation is present at asparagine 222. Serine 278 is an active-site residue. Residue aspartate 470 is part of the active site. N-linked (GlcNAc...) asparagine glycosylation occurs at asparagine 518. Histidine 529 is a catalytic residue.

It belongs to the peptidase S10 family.

The protein resides in the vacuole. The catalysed reaction is Release of a C-terminal amino acid with broad specificity.. Its function is as follows. Vacuolar carboxypeptidase involved in degradation of small peptides. Digests preferentially peptides containing an aliphatic or hydrophobic residue in P1' position, as well as methionine, leucine or phenylalanine in P1 position of ester substrate. The sequence is that of Carboxypeptidase Y homolog A (CPYA) from Sordaria macrospora (strain ATCC MYA-333 / DSM 997 / K(L3346) / K-hell).